The primary structure comprises 155 residues: FUN14 domain-containing protein 1 (155 aa).

Topologically, residues 1-47 (MASRNPPPQDYESDDESYEVLDLTEYARRHHWWNRVFGHSSGPMVEK) are cytoplasmic. S13 and S17 each carry phosphoserine. Y18 carries the post-translational modification Phosphotyrosine; by SRC. A YXXL motif is present at residues 18–21 (YEVL). Residues 48–68 (YSVATQIVMGGVTGWCAGFLF) traverse the membrane as a helical segment. Over 69 to 74 (QKVGKL) the chain is Mitochondrial intermembrane. The chain crosses the membrane as a helical span at residues 75 to 95 (AATAVGGGFLLLQVASHSGYV). At 96 to 133 (QIDWKRVEKDVNKAKRQIKKRANKAAPEINNIIEEATD) the chain is on the cytoplasmic side. K119 participates in a covalent cross-link: Glycyl lysine isopeptide (Lys-Gly) (interchain with G-Cter in ubiquitin). The helical transmembrane segment at 134-154 (FIKQNIVISSGFVGGFLLGLA) threads the bilayer. A topological domain (mitochondrial intermembrane) is located at residue S155.

This sequence belongs to the FUN14 family. As to quaternary structure, interacts (via YXXL motif) with MAP1 LC3 family proteins MAP1LC3A, MAP1LC3B and GABARAP. Interacts with DNM1L/DPR1. Interacts with GPX4. Post-translationally, phosphorylation at Ser-13 by CK2 and at Tyr-18 by SRC inhibits activation of mitophagy. Following hypoxia, dephosphorylated at Tyr-18, leading to interaction with MAP1 LC3 family proteins and triggering mitophagy. Dephosphorylation is mediated by PGAM5. Phosphorylated by ULK1 at Ser-17 which enhances FUNDC1 binding to LC3. Ubiquitinated on Lys-119. Deubiquitinated by USP19; leading to hypoxia-induced DRP1 oligomerization and GTPase activity.

The protein localises to the mitochondrion outer membrane. Functionally, integral mitochondrial outer-membrane protein that mediates the formation of mitochondria-associated endoplasmic reticulum membranes (MAMs). In turn, mediates angiogenesis and neoangiogenesis through interference with intracellular Ca(2+) communication and regulation of the vascular endothelial growth factor receptor KDR/VEGFR2 expression at both mRNA and protein levels. Also acts as an activator of hypoxia-induced mitophagy, an important mechanism for mitochondrial quality and homeostasis, by interacting with and recruiting LC3 protein family to mitochondria. Mechanistically, recruits DRP1 at ER-mitochondria contact sites leading to DRP1 oligomerization and GTPase activity to facilitate mitochondrial fission during hypoxia. Additionally, plays a role in hepatic ferroptosis by interacting directly with glutathione peroxidase/GPX4 to facilitate its recruitment into mitochondria through TOM/TIM complex where it is degraded by mitophagy. The polypeptide is FUN14 domain-containing protein 1 (Fundc1) (Mus musculus (Mouse)).